Reading from the N-terminus, the 318-residue chain is GTP cyclohydrolase MptA (318 aa).

Belongs to the GTP cyclohydrolase IV family. Homodimer. Fe(2+) serves as cofactor.

It carries out the reaction GTP + H2O = 7,8-dihydroneopterin 2',3'-cyclic phosphate + formate + diphosphate + H(+). Its pathway is cofactor biosynthesis; 5,6,7,8-tetrahydromethanopterin biosynthesis. Its function is as follows. Converts GTP to 7,8-dihydro-D-neopterin 2',3'-cyclic phosphate, the first intermediate in the biosynthesis of coenzyme methanopterin. The sequence is that of GTP cyclohydrolase MptA from Methanosarcina mazei (strain ATCC BAA-159 / DSM 3647 / Goe1 / Go1 / JCM 11833 / OCM 88) (Methanosarcina frisia).